A 166-amino-acid polypeptide reads, in one-letter code: UPF0336 protein ML2425 (166 aa).

In terms of domain architecture, MaoC-like spans 10-131; it reads LIGKHYRQLD…VIAEVRSEVT (122 aa).

This sequence belongs to the UPF0336 family.

The sequence is that of UPF0336 protein ML2425 from Mycobacterium leprae (strain TN).